The primary structure comprises 914 residues: Inter-alpha-trypsin inhibitor heavy chain H1 (914 aa).

Residues 1–30 (MDGAAVGLRVLLGLGLVSLLTLEAMPAAWG) form the signal peptide. A propeptide spanning residues 31-36 (LATTGR) is cleaved from the precursor. In terms of domain architecture, VIT spans 39 to 168 (AREKRQAVDT…KATFQLTYEE (130 aa)). The S-linked (Hex...) cysteine glycan is linked to Cys-62. Residue Ser-131 is modified to Phosphoserine. Residues Asn-288 and Asn-291 are each glycosylated (N-linked (GlcNAc...) asparagine). Residues 293 to 453 (SKNLVFVIDI…FNFLEVMSME (161 aa)) form the VWFA domain. Phosphothreonine is present on residues Thr-405 and Thr-410. The N-linked (GlcNAc...) asparagine glycan is linked to Asn-591. O-linked (GalNAc...) threonine glycosylation occurs at Thr-656. At Asp-675 the chain carries Aspartate 1-(chondroitin 4-sulfate)-ester. A propeptide spanning residues 676-914 (PHFIIYVPQK…HTDYIVPDIF (239 aa)) is cleaved from the precursor.

Belongs to the ITIH family. I-alpha-I plasma protease inhibitors are assembled from one or two heavy chains (HC) and one light chain, bikunin. Inter-alpha-inhibitor (I-alpha-I) is composed of ITIH1/HC1, ITIH2/HC2 and bikunin. Interacts with TNFAIP6 (via Link and CUB domains). In terms of processing, heavy chains are linked to bikunin via chondroitin 4-sulfate esterified to the alpha-carboxyl of the C-terminal aspartate after propeptide cleavage. The S-linked glycan is composed of two 6-carbon sugars, possibly Glc or Gal.

It localises to the secreted. Functionally, may act as a carrier of hyaluronan in serum or as a binding protein between hyaluronan and other matrix protein, including those on cell surfaces in tissues to regulate the localization, synthesis and degradation of hyaluronan which are essential to cells undergoing biological processes. The chain is Inter-alpha-trypsin inhibitor heavy chain H1 (ITIH1) from Mesocricetus auratus (Golden hamster).